Here is a 1168-residue protein sequence, read N- to C-terminus: DNA-directed RNA polymerase subunit beta (1168 aa).

The protein belongs to the RNA polymerase beta chain family. The RNAP catalytic core consists of 2 alpha, 1 beta, 1 beta' and 1 omega subunit. When a sigma factor is associated with the core the holoenzyme is formed, which can initiate transcription.

The enzyme catalyses RNA(n) + a ribonucleoside 5'-triphosphate = RNA(n+1) + diphosphate. DNA-dependent RNA polymerase catalyzes the transcription of DNA into RNA using the four ribonucleoside triphosphates as substrates. The sequence is that of DNA-directed RNA polymerase subunit beta from Rhodococcus jostii (strain RHA1).